Consider the following 456-residue polypeptide: Histidine--tRNA ligase (456 aa).

The span at 1 to 11 shows a compositional bias: polar residues; it reads MTQNENPSAQS. A disordered region spans residues 1 to 22; the sequence is MTQNENPSAQSGAKPEDKARPA.

This sequence belongs to the class-II aminoacyl-tRNA synthetase family. Homodimer.

It localises to the cytoplasm. The catalysed reaction is tRNA(His) + L-histidine + ATP = L-histidyl-tRNA(His) + AMP + diphosphate + H(+). This Cupriavidus pinatubonensis (strain JMP 134 / LMG 1197) (Cupriavidus necator (strain JMP 134)) protein is Histidine--tRNA ligase.